Reading from the N-terminus, the 284-residue chain is Nucleotide-binding protein NMA0948 (284 aa).

8 to 15 contacts ATP; it reads GLSGSGKS. Residue 58–61 participates in GTP binding; it reads DVRS.

The protein belongs to the RapZ-like family.

Displays ATPase and GTPase activities. This is Nucleotide-binding protein NMA0948 from Neisseria meningitidis serogroup A / serotype 4A (strain DSM 15465 / Z2491).